Here is a 419-residue protein sequence, read N- to C-terminus: Arginine biosynthesis bifunctional protein ArgJ 1, mitochondrial (419 aa).

Positions 177, 188, 275, 414, and 419 each coordinate substrate. Thr-188 acts as the Nucleophile in catalysis.

The protein belongs to the ArgJ family. In terms of assembly, heterodimer of an alpha and a beta chain. In terms of processing, the alpha and beta chains are autoproteolytically processed from a single precursor protein within the mitochondrion.

It localises to the mitochondrion matrix. The enzyme catalyses N(2)-acetyl-L-ornithine + L-glutamate = N-acetyl-L-glutamate + L-ornithine. It catalyses the reaction L-glutamate + acetyl-CoA = N-acetyl-L-glutamate + CoA + H(+). It participates in amino-acid biosynthesis; L-arginine biosynthesis; L-ornithine and N-acetyl-L-glutamate from L-glutamate and N(2)-acetyl-L-ornithine (cyclic): step 1/1. Its pathway is amino-acid biosynthesis; L-arginine biosynthesis; N(2)-acetyl-L-ornithine from L-glutamate: step 1/4. Functionally, catalyzes two activities which are involved in the cyclic version of arginine biosynthesis: the synthesis of acetylglutamate from glutamate and acetyl-CoA, and of ornithine by transacetylation between acetylornithine and glutamate. The protein is Arginine biosynthesis bifunctional protein ArgJ 1, mitochondrial of Sclerotinia sclerotiorum (strain ATCC 18683 / 1980 / Ss-1) (White mold).